The following is a 435-amino-acid chain: Elongation factor 1-alpha (435 aa).

The region spanning 4 to 229 is the tr-type G domain; that stretch reads KPHLNLIVIG…DMLEIPPKPV (226 aa). The G1 stretch occupies residues 13–20; it reads GHVDHGKS. 13 to 20 serves as a coordination point for GTP; sequence GHVDHGKS. S20 is a Mg(2+) binding site. The segment at 69–73 is G2; that stretch reads GVTIN. The G3 stretch occupies residues 90-93; it reads DAPG. Residues 90–94 and 152–155 contribute to the GTP site; these read DAPGH and TKMD. The G4 stretch occupies residues 152–155; sequence TKMD. The tract at residues 193 to 195 is G5; that stretch reads VSI.

This sequence belongs to the TRAFAC class translation factor GTPase superfamily. Classic translation factor GTPase family. EF-Tu/EF-1A subfamily.

Its subcellular location is the cytoplasm. The enzyme catalyses GTP + H2O = GDP + phosphate + H(+). In terms of biological role, GTP hydrolase that promotes the GTP-dependent binding of aminoacyl-tRNA to the A-site of ribosomes during protein biosynthesis. The protein is Elongation factor 1-alpha of Metallosphaera sedula (strain ATCC 51363 / DSM 5348 / JCM 9185 / NBRC 15509 / TH2).